Reading from the N-terminus, the 456-residue chain is RUN domain-containing protein 3B (456 aa).

The disordered stretch occupies residues 1–26; it reads MASRSLGGLSGIRGGGGGGGKKSLSS. Residues 8 to 21 show a composition bias toward gly residues; that stretch reads GLSGIRGGGGGGGK. Arg-13 is subject to Omega-N-methylarginine. The RUN domain occupies 57–189; that stretch reads DDSSPEFNNF…IDFSFCLKGE (133 aa). Residues Ser-215 and Ser-216 each carry the phosphoserine modification. The stretch at 300 to 325 forms a coiled coil; the sequence is AHKLEKEQLEYIIVELQDQLTVLKNN. A disordered region spans residues 382 to 405; that stretch reads SLSQTSLDPGQSQEGDGKQDTLNI.

This sequence belongs to the RUNDC3 family. Interacts with RAP2A.

The protein is RUN domain-containing protein 3B (RUNDC3B) of Macaca fascicularis (Crab-eating macaque).